Reading from the N-terminus, the 151-residue chain is Neuroglobin (151 aa).

Residues 1–149 (MERPESELIR…VVQAMSRGWD (149 aa)) form the Globin domain. Residues H64 and H96 each contribute to the heme b site.

Belongs to the globin family. In terms of assembly, monomer. Homodimer and homotetramer; disulfide-linked. Mainly monomeric but also detected as part of homodimers and homotetramers. Interacts with 14-3-3 proteins; regulates the phosphorylation of NGB. Could interact (ferrous form) with G-alpha(i) proteins (GTP-bound form). Phosphorylated during hypoxia by ERK1/ERK2. Phosphorylation regulates the heme pocket hexacoordination preventing the association of His-64 with the heme metal center. Thereby, promotes the access of dioxygen and nitrite to the heme and stimulates the nitrite reductase activity. Phosphorylation during hypoxia is stabilized by 14-3-3 proteins. As to expression, widely distributed throughout the adult brain, including cerebral cortex, hippocampus, thalamus, hypothalamus, olfactory bulb, and cerebellum.

The protein localises to the cytoplasm. The protein resides in the cytosol. It localises to the mitochondrion matrix. It catalyses the reaction Fe(III)-heme b-[protein] + nitric oxide + H2O = Fe(II)-heme b-[protein] + nitrite + 2 H(+). Monomeric globin with a bis-histidyl six-coordinate heme-iron atom through which it can bind dioxygen, carbon monoxide and nitric oxide. Could help transport oxygen and increase its availability to the metabolically active neuronal tissues, though its low quantity in tissues as well as its high affinity for dioxygen, which may limit its oxygen-releasing ability, argue against it. The ferrous/deoxygenated form exhibits a nitrite reductase activity and it could produce nitric oxide which in turn inhibits cellular respiration in response to hypoxia. In its ferrous/deoxygenated state, it may also exhibit GDI (Guanine nucleotide Dissociation Inhibitor) activity toward heterotrimeric G-alpha proteins, thereby regulating signal transduction to facilitate neuroprotective responses in the wake of hypoxia and associated oxidative stress. The chain is Neuroglobin from Rattus norvegicus (Rat).